The sequence spans 372 residues: Queuine tRNA-ribosyltransferase (372 aa).

The Proton acceptor role is filled by Asp92. Substrate contacts are provided by residues 92 to 96 (DSGGY), Asp146, Gln188, and Gly215. An RNA binding region spans residues 246–252 (GIGSLRE). Residue Asp265 is the Nucleophile of the active site. The segment at 270–274 (TRLGR) is RNA binding; important for wobble base 34 recognition. 4 residues coordinate Zn(2+): Cys303, Cys305, Cys308, and His334.

It belongs to the queuine tRNA-ribosyltransferase family. In terms of assembly, homodimer. Within each dimer, one monomer is responsible for RNA recognition and catalysis, while the other monomer binds to the replacement base PreQ1. Zn(2+) is required as a cofactor.

It catalyses the reaction 7-aminomethyl-7-carbaguanine + guanosine(34) in tRNA = 7-aminomethyl-7-carbaguanosine(34) in tRNA + guanine. The protein operates within tRNA modification; tRNA-queuosine biosynthesis. Catalyzes the base-exchange of a guanine (G) residue with the queuine precursor 7-aminomethyl-7-deazaguanine (PreQ1) at position 34 (anticodon wobble position) in tRNAs with GU(N) anticodons (tRNA-Asp, -Asn, -His and -Tyr). Catalysis occurs through a double-displacement mechanism. The nucleophile active site attacks the C1' of nucleotide 34 to detach the guanine base from the RNA, forming a covalent enzyme-RNA intermediate. The proton acceptor active site deprotonates the incoming PreQ1, allowing a nucleophilic attack on the C1' of the ribose to form the product. After dissociation, two additional enzymatic reactions on the tRNA convert PreQ1 to queuine (Q), resulting in the hypermodified nucleoside queuosine (7-(((4,5-cis-dihydroxy-2-cyclopenten-1-yl)amino)methyl)-7-deazaguanosine). The protein is Queuine tRNA-ribosyltransferase of Prochlorococcus marinus (strain MIT 9211).